The sequence spans 298 residues: Protoheme IX farnesyltransferase (298 aa).

The next 9 helical transmembrane spans lie at 26–46, 52–72, 99–119, 120–140, 148–168, 174–194, 219–239, 241–261, and 276–296; these read VVSLIVFTAVIGMFLSVPGVV, IFATVGIAFVAGAAAAVNCLV, FVFLALVGGAGLLILHQLVNP, LTMWLTLGTFVGYAIIYTVIL, IVIGGASGAMPPVLGWAAVTG, ALLLFLIIFAWTPPHFWALAL, LHVLLYTLILIAVTLMPYATQ, SGLIYLAGAIVLDVIFLYYAV, and FRYSILYLAGLFAVLLVDHYI.

Belongs to the UbiA prenyltransferase family. Protoheme IX farnesyltransferase subfamily.

It is found in the cell inner membrane. The enzyme catalyses heme b + (2E,6E)-farnesyl diphosphate + H2O = Fe(II)-heme o + diphosphate. It participates in porphyrin-containing compound metabolism; heme O biosynthesis; heme O from protoheme: step 1/1. Functionally, converts heme B (protoheme IX) to heme O by substitution of the vinyl group on carbon 2 of heme B porphyrin ring with a hydroxyethyl farnesyl side group. This Nitrosospira multiformis (strain ATCC 25196 / NCIMB 11849 / C 71) protein is Protoheme IX farnesyltransferase.